Consider the following 652-residue polypeptide: Acetyl-coenzyme A synthetase (652 aa).

CoA contacts are provided by residues 189–192 (RGDK) and Thr-311. ATP contacts are provided by residues 387–389 (GEP), 411–416 (DTWWQT), Asp-500, and Arg-515. Ser-523 contacts CoA. An ATP-binding site is contributed by Arg-526. The Mg(2+) site is built by His-539 and Val-542. Arg-584 contributes to the CoA binding site. Lys-609 carries the post-translational modification N6-acetyllysine.

This sequence belongs to the ATP-dependent AMP-binding enzyme family. The cofactor is Mg(2+). Post-translationally, acetylated. Deacetylation by the SIR2-homolog deacetylase activates the enzyme.

The enzyme catalyses acetate + ATP + CoA = acetyl-CoA + AMP + diphosphate. Catalyzes the conversion of acetate into acetyl-CoA (AcCoA), an essential intermediate at the junction of anabolic and catabolic pathways. AcsA undergoes a two-step reaction. In the first half reaction, AcsA combines acetate with ATP to form acetyl-adenylate (AcAMP) intermediate. In the second half reaction, it can then transfer the acetyl group from AcAMP to the sulfhydryl group of CoA, forming the product AcCoA. The sequence is that of Acetyl-coenzyme A synthetase from Bartonella bacilliformis (strain ATCC 35685 / KC583 / Herrer 020/F12,63).